Consider the following 212-residue polypeptide: MKNIDDLVDSASDLAQRGLSKGEIADELNVSRETASWLVERSGTGTEPDTSDDGGPHDIHVDWSAVGRDSNRLYHAGAAMADLLSKKGDDVDLTIGIEKAGAPLATTVARELETDLGTYAPTKHQWDDDESETSDGSFSRNFAQIRNRDCYVVDDTITSGKTMGETIDAIHEQGGNPVACVVLADKRGIGDIRGVPVYSLLQVIRVGSDGDS.

The segment at 38 to 60 (LVERSGTGTEPDTSDDGGPHDIH) is disordered.

Belongs to the purine/pyrimidine phosphoribosyltransferase family. GfcR subfamily.

Functionally, DNA-binding transcriptional regulator that functions as a regulator of central sugar catabolic pathways. In Haloarcula marismortui (strain ATCC 43049 / DSM 3752 / JCM 8966 / VKM B-1809) (Halobacterium marismortui), this protein is Transcriptional regulator GfcR.